The sequence spans 154 residues: Lipoprotein signal peptidase (154 aa).

The next 2 membrane-spanning stretches (helical) occupy residues 55–75 (GHMW…IYIM) and 84–104 (LFSI…IDRV). Residues D111 and D129 contribute to the active site. A helical membrane pass occupies residues 124–144 (IFNVADASLSVGVVLMLVYVF).

Belongs to the peptidase A8 family.

It localises to the cell membrane. It carries out the reaction Release of signal peptides from bacterial membrane prolipoproteins. Hydrolyzes -Xaa-Yaa-Zaa-|-(S,diacylglyceryl)Cys-, in which Xaa is hydrophobic (preferably Leu), and Yaa (Ala or Ser) and Zaa (Gly or Ala) have small, neutral side chains.. It participates in protein modification; lipoprotein biosynthesis (signal peptide cleavage). This protein specifically catalyzes the removal of signal peptides from prolipoproteins. The protein is Lipoprotein signal peptidase of Listeria monocytogenes serovar 1/2a (strain ATCC BAA-679 / EGD-e).